The primary structure comprises 384 residues: O-phospho-L-seryl-tRNA:Cys-tRNA synthase 1 (384 aa).

Pyridoxal 5'-phosphate contacts are provided by residues alanine 88–arginine 89, asparagine 195, and serine 218–histidine 220. Lysine 221 is modified (N6-(pyridoxal phosphate)lysine).

It belongs to the SepCysS family. Homodimer. Interacts with SepRS. Requires pyridoxal 5'-phosphate as cofactor.

It carries out the reaction O-phospho-L-seryl-tRNA(Cys) + hydrogen sulfide + H(+) = L-cysteinyl-tRNA(Cys) + phosphate. Converts O-phospho-L-seryl-tRNA(Cys) (Sep-tRNA(Cys)) to L-cysteinyl-tRNA(Cys) (Cys-tRNA(Cys)). This chain is O-phospho-L-seryl-tRNA:Cys-tRNA synthase 1, found in Methanocella arvoryzae (strain DSM 22066 / NBRC 105507 / MRE50).